Consider the following 259-residue polypeptide: Ribonuclease HII (259 aa).

Residues 1–26 form a disordered region; the sequence is MLSTPPKLPSAHGPVHFPRRSGTGMN. Residues 55–243 enclose the RNase H type-2 domain; it reads APVAGADEAG…VRAQQLVLFE (189 aa). Positions 61, 62, and 152 each coordinate a divalent metal cation.

The protein belongs to the RNase HII family. Requires Mn(2+) as cofactor. The cofactor is Mg(2+).

Its subcellular location is the cytoplasm. It catalyses the reaction Endonucleolytic cleavage to 5'-phosphomonoester.. Its function is as follows. Endonuclease that specifically degrades the RNA of RNA-DNA hybrids. The chain is Ribonuclease HII from Azorhizobium caulinodans (strain ATCC 43989 / DSM 5975 / JCM 20966 / LMG 6465 / NBRC 14845 / NCIMB 13405 / ORS 571).